A 525-amino-acid polypeptide reads, in one-letter code: Alpha-ketoglutaric semialdehyde dehydrogenase 2 (525 aa).

Residues Lys185, Glu188, and Gly242–Gly247 each bind NAD(+). Residue Glu266 is the Proton acceptor of the active site. Cys303 acts as the Nucleophile in catalysis. Position 394 (Glu394) interacts with NAD(+).

This sequence belongs to the aldehyde dehydrogenase family. Homodimer.

The enzyme catalyses 2,5-dioxopentanoate + NADP(+) + H2O = 2-oxoglutarate + NADPH + 2 H(+). It catalyses the reaction 2,5-dioxopentanoate + NAD(+) + H2O = 2-oxoglutarate + NADH + 2 H(+). It participates in carbohydrate acid metabolism; D-glucarate degradation. Its pathway is carbohydrate acid metabolism; galactarate degradation. Catalyzes the NAD(P)(+)-dependent oxidation of alpha-ketoglutaric semialdehyde (alphaKGSA) to alpha-ketoglutarate. Involved in D-glucarate/D-galactarate metabolism. Prefers NAD(+) to NADP(+) as a cosubstrate. This chain is Alpha-ketoglutaric semialdehyde dehydrogenase 2, found in Azospirillum brasilense.